The primary structure comprises 400 residues: Methylthioribose kinase (400 aa).

Residues Asn-44, Lys-61, and 115 to 117 (EDL) each bind ATP. Asp-233 is a binding site for substrate. 250 to 252 (DPE) provides a ligand contact to ATP. A substrate-binding site is contributed by Arg-340.

It belongs to the methylthioribose kinase family. In terms of assembly, homodimer.

The enzyme catalyses 5-(methylsulfanyl)-D-ribose + ATP = 5-(methylsulfanyl)-alpha-D-ribose 1-phosphate + ADP + H(+). Its pathway is amino-acid biosynthesis; L-methionine biosynthesis via salvage pathway; S-methyl-5-thio-alpha-D-ribose 1-phosphate from S-methyl-5'-thioadenosine (hydrolase route): step 2/2. In terms of biological role, catalyzes the phosphorylation of methylthioribose into methylthioribose-1-phosphate. The chain is Methylthioribose kinase from Geobacillus sp. (strain WCH70).